Consider the following 249-residue polypeptide: ATP synthase subunit a, chloroplastic (249 aa).

5 helical membrane-spanning segments follow: residues 40–60, 97–117, 136–156, 201–221, and 222–242; these read QVLITSWVVIAILLGSAIVAV, VPFIGTMFLFIFVSNWAGALL, INTTVALALLTSIAYFYAGLS, LVVVVLVSLVPSVVPIPVMFL, and GLFTSGIQALIFATLAAAYIG.

It belongs to the ATPase A chain family. In terms of assembly, F-type ATPases have 2 components, CF(1) - the catalytic core - and CF(0) - the membrane proton channel. CF(1) has five subunits: alpha(3), beta(3), gamma(1), delta(1), epsilon(1). CF(0) has four main subunits: a, b, b' and c.

The protein localises to the plastid. The protein resides in the chloroplast thylakoid membrane. In terms of biological role, key component of the proton channel; it plays a direct role in the translocation of protons across the membrane. The protein is ATP synthase subunit a, chloroplastic of Manihot esculenta (Cassava).